The primary structure comprises 537 residues: Tyrosine-protein phosphatase CDC14 homolog (537 aa).

Residues 182–345 enclose the Tyrosine-protein phosphatase domain; that stretch reads DFNWISPKFI…QVHFRAYFYE (164 aa). Residue Cys-286 is the Phosphocysteine intermediate of the active site. A disordered region spans residues 359–537; sequence EPLATPPRHP…PKPSKSRLIS (179 aa). Residues 370–382 show a composition bias toward polar residues; that stretch reads NATNGTSQSNIST. Residues 400–411 are compositionally biased toward low complexity; the sequence is PPSARRLPSASS. Positions 421 to 437 are enriched in polar residues; the sequence is ASKQSIQNENKASYSSY. Phosphothreonine is present on Thr-453. Ser-468 and Ser-470 each carry phosphoserine. The span at 490-502 shows a compositional bias: low complexity; sequence RRTSGNRWSSGSS. The residue at position 513 (Ser-513) is a Phosphoserine. Positions 514–523 are enriched in polar residues; the sequence is MSSLNNTSNG. The span at 526-537 shows a compositional bias: basic residues; sequence AKPKPSKSRLIS.

It belongs to the protein-tyrosine phosphatase family. Non-receptor class CDC14 subfamily. In terms of assembly, interacts with ark1 at the kinetochores. Interacts with bir1, cdc25, mid1, nbl1, pic1, and rad24. Post-translationally, phosphorylated by cds1, chk1, pmk1, and cdc2 upon Hydroxylurea and H(2)O(2) stress treatment. Phosphorylation regulates the nucleolar-to-nucleoplasmic transition. Is able to autodephosphorylate.

The protein localises to the nucleus. It localises to the nucleolus. It is found in the cytoplasm. Its subcellular location is the cytoskeleton. The protein resides in the microtubule organizing center. The protein localises to the spindle pole body. The catalysed reaction is O-phospho-L-tyrosyl-[protein] + H2O = L-tyrosyl-[protein] + phosphate. Its function is as follows. Protein phosphatase which antagonizes mitotic cyclin-dependent kinase cdc2, the inactivation of which is essential for exit from mitosis. To access its substrates, is released from nucleolar sequestration during mitosis. Plays an essential in coordinating the nuclear division cycle with cytokinesis through the cytokinesis checkpoint. Involved in chromosome segregation, where it is required for meiosis I spindle dissambly as well as for establishing two consecutive chromosome segregation phases. Allows damaged actomyosin rings to be maintained to facilitate completion of cell division in response to minor perturbation of the cell division machinery. Dephosphorylates the mitotic inducer cdc25 for its rapid degradation. Down-regulation of cdc25 activity ensures a prompt inactivation of mitotic cdc2 complexes to trigger cell division. Also dephosphorylates cdc2-phosphorylated nsk1, allowing nsk1-binding to kinetochores and spindle. Dephosphorylates ase1, which is essential for spindle midzone assembly and for continuous extension of the anaphase spindle. Tethered to the contractile ring by mid1, where it dephosphorylates cdc15. The sequence is that of Tyrosine-protein phosphatase CDC14 homolog (clp1) from Schizosaccharomyces pombe (strain 972 / ATCC 24843) (Fission yeast).